Here is a 438-residue protein sequence, read N- to C-terminus: Dol-P-Man:Man(5)GlcNAc(2)-PP-Dol alpha-1,3-mannosyltransferase (438 aa).

Ser13 is subject to Phosphoserine. A run of 11 helical transmembrane segments spans residues 41 to 61 (YTLL…FWVI), 95 to 115 (TGPL…YYAT), 123 to 143 (MAQN…FLIY), 149 to 169 (VPPF…SIFV), 172 to 192 (LFND…LLAQ), 203 to 223 (LAVS…FLLL), 231 to 251 (ALPK…PFLL), 289 to 309 (FHLA…LCRW), 332 to 352 (PLTP…GICF), 356 to 376 (LHYQ…WAMP), and 407 to 427 (AALH…PQPF).

The protein belongs to the glycosyltransferase ALG3 family.

Its subcellular location is the endoplasmic reticulum membrane. It catalyses the reaction an alpha-D-Man-(1-&gt;2)-alpha-D-Man-(1-&gt;2)-alpha-D-Man-(1-&gt;3)-[alpha-D-Man-(1-&gt;6)]-beta-D-Man-(1-&gt;4)-beta-D-GlcNAc-(1-&gt;4)-alpha-D-GlcNAc-diphospho-di-trans,poly-cis-dolichol + a di-trans,poly-cis-dolichyl beta-D-mannosyl phosphate = an alpha-D-Man-(1-&gt;2)-alpha-D-Man-(1-&gt;2)-alpha-D-Man-(1-&gt;3)-[alpha-D-Man-(1-&gt;3)-alpha-D-Man-(1-&gt;6)]-beta-D-Man-(1-&gt;4)-beta-D-GlcNAc-(1-&gt;4)-alpha-D-GlcNAc-diphospho-di-trans,poly-cis-dolichol + a di-trans,poly-cis-dolichyl phosphate + H(+). It participates in protein modification; protein glycosylation. Dol-P-Man:Man(5)GlcNAc(2)-PP-Dol alpha-1,3-mannosyltransferase that operates in the biosynthetic pathway of dolichol-linked oligosaccharides, the glycan precursors employed in protein asparagine (N)-glycosylation. The assembly of dolichol-linked oligosaccharides begins on the cytosolic side of the endoplasmic reticulum membrane and finishes in its lumen. The sequential addition of sugars to dolichol pyrophosphate produces dolichol-linked oligosaccharides containing fourteen sugars, including two GlcNAcs, nine mannoses and three glucoses. Once assembled, the oligosaccharide is transferred from the lipid to nascent proteins by oligosaccharyltransferases. In the lumen of the endoplasmic reticulum, adds the first dolichyl beta-D-mannosyl phosphate derived mannose in an alpha-1,3 linkage to Man(5)GlcNAc(2)-PP-dolichol to produce Man(6)GlcNAc(2)-PP-dolichol. Man(6)GlcNAc(2)-PP-dolichol is a substrate for ALG9, the following enzyme in the biosynthetic pathway. This is Dol-P-Man:Man(5)GlcNAc(2)-PP-Dol alpha-1,3-mannosyltransferase from Homo sapiens (Human).